The chain runs to 202 residues: 3-isopropylmalate dehydratase small subunit (202 aa).

Belongs to the LeuD family. LeuD type 1 subfamily. As to quaternary structure, heterodimer of LeuC and LeuD.

The enzyme catalyses (2R,3S)-3-isopropylmalate = (2S)-2-isopropylmalate. Its pathway is amino-acid biosynthesis; L-leucine biosynthesis; L-leucine from 3-methyl-2-oxobutanoate: step 2/4. Functionally, catalyzes the isomerization between 2-isopropylmalate and 3-isopropylmalate, via the formation of 2-isopropylmaleate. In Buchnera aphidicola subsp. Pemphigus spyrothecae, this protein is 3-isopropylmalate dehydratase small subunit.